The following is a 72-amino-acid chain: MIYKVYYQNDQKRNPKREDTHSLYLEAPTEVEARALVEAHTEHNIEFIEAIEGETLAYEQQNPNYKLTEFSE.

This sequence belongs to the RNA polymerase subunit epsilon family. RNAP is composed of a core of 2 alpha, a beta and a beta' subunit. The core is associated with a delta subunit, and at least one of epsilon or omega. When a sigma factor is associated with the core the holoenzyme is formed, which can initiate transcription.

It carries out the reaction RNA(n) + a ribonucleoside 5'-triphosphate = RNA(n+1) + diphosphate. In terms of biological role, a non-essential component of RNA polymerase (RNAP). This chain is DNA-directed RNA polymerase subunit epsilon, found in Levilactobacillus brevis (strain ATCC 367 / BCRC 12310 / CIP 105137 / JCM 1170 / LMG 11437 / NCIMB 947 / NCTC 947) (Lactobacillus brevis).